The sequence spans 490 residues: Subtilisin-like protease 8 (490 aa).

The signal sequence occupies residues 1 to 26 (MKGLLSLSVLPVLAYASPMIVDSIHQ). Residues 27 to 134 (NAAPILSSTN…YIERDSEVHT (108 aa)) constitute a propeptide that is removed on maturation. An Inhibitor I9 domain is found at 43–134 (SYIVVFKKGV…YIERDSEVHT (92 aa)). One can recognise a Peptidase S8 domain in the interval 144 to 450 (PWGLARISHR…GGSDDYKKII (307 aa)). Catalysis depends on charge relay system residues aspartate 180 and histidine 212. An N-linked (GlcNAc...) asparagine glycan is attached at asparagine 282. Serine 378 functions as the Charge relay system in the catalytic mechanism. An N-linked (GlcNAc...) asparagine glycan is attached at asparagine 456.

The protein belongs to the peptidase S8 family.

Its subcellular location is the secreted. Secreted subtilisin-like serine protease with keratinolytic activity that contributes to pathogenicity. This chain is Subtilisin-like protease 8 (SUB8), found in Trichophyton verrucosum (strain HKI 0517).